Here is a 122-residue protein sequence, read N- to C-terminus: Small ribosomal subunit protein uS13 (122 aa).

The interval 94 to 122 (KGLPVRGQRTHTNARTRKGPRRAIAGKKK) is disordered.

Belongs to the universal ribosomal protein uS13 family. In terms of assembly, part of the 30S ribosomal subunit. Forms a loose heterodimer with protein S19. Forms two bridges to the 50S subunit in the 70S ribosome.

In terms of biological role, located at the top of the head of the 30S subunit, it contacts several helices of the 16S rRNA. In the 70S ribosome it contacts the 23S rRNA (bridge B1a) and protein L5 of the 50S subunit (bridge B1b), connecting the 2 subunits; these bridges are implicated in subunit movement. Contacts the tRNAs in the A and P-sites. The polypeptide is Small ribosomal subunit protein uS13 (Syntrophus aciditrophicus (strain SB)).